We begin with the raw amino-acid sequence, 157 residues long: Snaclec A16 (157 aa).

A signal peptide spans 1 to 23; that stretch reads MGRLISVSFGLLVVFLSLSGTGA. 3 disulfide bridges follow: Cys-27–Cys-38, Cys-55–Cys-149, and Cys-124–Cys-141. Positions 34–150 constitute a C-type lectin domain; that stretch reads YEGHCYKVFN…CELAYHFICM (117 aa).

The protein belongs to the snaclec family. In terms of assembly, heterodimer; disulfide-linked. Expressed by the venom gland.

Its subcellular location is the secreted. Functionally, interferes with one step of hemostasis (modulation of platelet aggregation, or coagulation cascade, for example). This is Snaclec A16 from Macrovipera lebetinus (Levantine viper).